Consider the following 836-residue polypeptide: Hypoxia-inducible factor 1-alpha (836 aa).

A disordered region spans residues 1-30 (MEGAGGENEKKKMSSERRKEKSRDAARSRR). The tract at residues 1 to 401 (MEGAGGENEK…KEPDALTLLA (401 aa)) is interaction with TSGA10. A compositionally biased stretch (basic and acidic residues) spans 7 to 30 (ENEKKKMSSERRKEKSRDAARSRR). Residues 17–70 (RRKEKSRDAARSRRSKESEVFYELAHQLPLPHNVSSHLDKASVMRLTISYLRVR) form the bHLH domain. A DNA-binding region spans residues 21–30 (KSRDAARSRR). Positions 80 to 155 (SEDEMKAQMD…EMLTHRNGPV (76 aa)) constitute a PAS 1 domain. The tract at residues 170 to 191 (RMKCTLTSRGRTMNIKSATWKV) is required for heterodimer formation with ARNT. A PAS 2 domain is found at 228–298 (PHPSNIEIPL…KTHHDMFTKG (71 aa)). The residue at position 247 (Ser247) is a Phosphoserine; by CK1. The 44-residue stretch at 302–345 (TGQYRMLAKRGGYVWVETQATVIYNTKNSQPQCIVCVNYVVSGI) folds into the PAC domain. Residues 380–417 (SEDTSCLFDKLKKEPDALTLLAPAAGDTIISLDFGSDD) form an N-terminal VHL recognition site region. A Glycyl lysine isopeptide (Lys-Gly) (interchain with G-Cter in SUMO) cross-link involves residue Lys391. The interval 401 to 613 (APAAGDTIIS…PSMSTVTGFQ (213 aa)) is ODD. Position 402 is a 4-hydroxyproline (Pro402). Residue Lys476 forms a Glycyl lysine isopeptide (Lys-Gly) (interchain with G-Cter in SUMO) linkage. A disordered region spans residues 492 to 511 (QIQDQPASPSDGSTRQSSPE). The NTAD stretch occupies residues 544 to 588 (FKLELVEKLFAEDTEAKNPFSTQDTDLDLEMLAPYIPMDDDFQLR). Lys545 carries the N6-acetyllysine; alternate modification. Glycyl lysine isopeptide (Lys-Gly) (interchain with G-Cter in ubiquitin) cross-links involve residues Lys545, Lys551, and Lys560. Residue Lys545 forms a Glycyl lysine isopeptide (Lys-Gly) (interchain with G-Cter in ubiquitin); alternate linkage. Ser564 is modified (phosphoserine; by GSK3-beta). At Thr568 the chain carries Phosphothreonine; by GSK3-beta. The tract at residues 569–585 (DLDLEMLAPYIPMDDDF) is C-terminal VHL recognition site. 4-hydroxyproline is present on Pro577. The residue at position 589 (Ser589) is a Phosphoserine; by PLK3. The tract at residues 589-795 (SFDQLSPLES…SDLACRLLGQ (207 aa)) is ID. 2 disordered regions span residues 593–684 (LSPL…DRAG) and 707–734 (QRNT…KMEH). Ser602 is modified (phosphoserine; by GSK3-beta). Residues 608-620 (TVTGFQQTQLQKP) show a composition bias toward polar residues. The span at 621–632 (TITATATTTATT) shows a compositional bias: low complexity. Positions 633 to 647 (DESKTETKDNKEDIK) are enriched in basic and acidic residues. Polar residues predominate over residues 652–678 (SPSSTQVPQETTTAKASAYSGTHSRTA). Ser668 bears the Phosphoserine; by PLK3 mark. Lys719 bears the N6-acetyllysine mark. A Nuclear localization signal motif is present at residues 728–731 (RKRK). The interval 796 to 836 (SMDESGLPQLTSYDCEVNAPIQGSRNLLQGEELLRALDQVN) is CTAD. Cys810 is modified (S-nitrosocysteine). Asn813 carries the post-translational modification (3S)-3-hydroxyasparagine.

Interacts with the ARNT; forms a heterodimer that binds core DNA sequence 5'-TACGTG-3' within the hypoxia response element (HRE) of target gene promoters. Interacts with COPS5; the interaction increases the transcriptional activity of HIF1A through increased stability. Interacts with EP300 (via TAZ-type 1 domains); the interaction is stimulated in response to hypoxia and inhibited by CITED2. Interacts with CREBBP (via TAZ-type 1 domains). Interacts with NCOA1, NCOA2, APEX1 and HSP90. Interacts (hydroxylated within the ODD domain) with VHLL (via beta domain); the interaction, leads to polyubiquitination and subsequent HIF1A proteasomal degradation. During hypoxia, sumoylated HIF1A also binds VHL; the interaction promotes the ubiquitination of HIF1A. Interacts with SENP1; the interaction desumoylates HIF1A resulting in stabilization and activation of transcription. Interacts (via the ODD domain) with NAA10; the interaction appears not to acetylate HIF1A nor have any affect on protein stability, during hypoxia. Interacts with RWDD3; the interaction enhances HIF1A sumoylation. Interacts with TSGA10. Interacts with HIF3A. Interacts with RORA (via the DNA binding domain); the interaction enhances HIF1A transcription under hypoxia through increasing protein stability. Interaction with PSMA7 inhibits the transactivation activity of HIF1A under both normoxic and hypoxia-mimicking conditions. Interacts with USP20. Interacts with RACK1; promotes HIF1A ubiquitination and proteasome-mediated degradation. Interacts (via N-terminus) with USP19. Interacts with SIRT2. Interacts (deacetylated form) with EGLN1. Interacts with CBFA2T3. Interacts with HSP90AA1 and HSP90AB1. Interacts with DCUN1D1; this interaction increases the interaction between VHL and DCUN1D1. Interacts with HIF1AN. In terms of processing, S-nitrosylation of Cys-810 may be responsible for increased recruitment of p300 coactivator necessary for transcriptional activity of HIF-1 complex. Post-translationally, requires phosphorylation for DNA-binding. Phosphorylation at Ser-247 by CSNK1D/CK1 represses kinase activity and impairs ARNT binding. Phosphorylation by GSK3-beta and PLK3 promote degradation by the proteasome. Sumoylated; with SUMO1 under hypoxia. Sumoylation is enhanced through interaction with RWDD3. Both sumoylation and desumoylation seem to be involved in the regulation of its stability during hypoxia. Sumoylation can promote either its stabilization or its VHL-dependent degradation by promoting hydroxyproline-independent HIF1A-VHL complex binding, thus leading to HIF1A ubiquitination and proteasomal degradation. Desumoylation by SENP1 increases its stability amd transcriptional activity. There is a disaccord between various publications on the effect of sumoylation and desumoylation on its stability and transcriptional activity. In terms of processing, acetylation of Lys-545 by ARD1 increases interaction with VHL and stimulates subsequent proteasomal degradation. Deacetylation of Lys-719 by SIRT2 increases its interaction with and hydroxylation by EGLN1 thereby inactivating HIF1A activity by inducing its proteasomal degradation. Post-translationally, ubiquitinated; in normoxia, following hydroxylation and interaction with VHL. Lys-545 appears to be the principal site of ubiquitination. Clioquinol, the Cu/Zn-chelator, inhibits ubiquitination through preventing hydroxylation at Asn-813. Ubiquitinated by E3 ligase VHL. Deubiquitinated by UCHL1. The iron and 2-oxoglutarate dependent 3-hydroxylation of asparagine is (S) stereospecific within HIF CTAD domains. In terms of processing, in normoxia, is hydroxylated on Pro-402 and Pro-577 in the oxygen-dependent degradation domain (ODD) by EGLN1/PHD2 and EGLN2/PHD1. EGLN3/PHD3 has also been shown to hydroxylate Pro-577. The hydroxylated prolines promote interaction with VHL, initiating rapid ubiquitination and subsequent proteasomal degradation. Deubiquitinated by USP20. Under hypoxia, proline hydroxylation is impaired and ubiquitination is attenuated, resulting in stabilization. In normoxia, is hydroxylated on Asn-813 by HIF1AN, thus abrogating interaction with CREBBP and EP300 and preventing transcriptional activation. Repressed by iron ion, via Fe(2+) prolyl hydroxylase (PHD) enzymes-mediated hydroxylation and subsequent proteasomal degradation. In terms of tissue distribution, ubiquitous.

The protein resides in the cytoplasm. Its subcellular location is the nucleus. It is found in the nucleus speckle. Its activity is regulated as follows. Induced by reactive oxygen species (ROS). Functions as a master transcriptional regulator of the adaptive response to hypoxia. Under hypoxic conditions, activates the transcription of over 40 genes, including erythropoietin, glucose transporters, glycolytic enzymes, vascular endothelial growth factor, HILPDA, and other genes whose protein products increase oxygen delivery or facilitate metabolic adaptation to hypoxia. Plays an essential role in embryonic vascularization, tumor angiogenesis and pathophysiology of ischemic disease. Heterodimerizes with ARNT; heterodimer binds to core DNA sequence 5'-TACGTG-3' within the hypoxia response element (HRE) of target gene promoters. Activation requires recruitment of transcriptional coactivators such as CREBBP and EP300. Activity is enhanced by interaction with NCOA1 and/or NCOA2. Interaction with redox regulatory protein APEX1 seems to activate CTAD and potentiates activation by NCOA1 and CREBBP. Involved in the axonal distribution and transport of mitochondria in neurons during hypoxia. This chain is Hypoxia-inducible factor 1-alpha (Hif1a), found in Mus musculus (Mouse).